The primary structure comprises 165 residues: MAQDPSFDIVSKLERPELQNAVSQAMTEIQTRFDFKGSNSEIKITDDQLVLTSENEIKLKQVIDVLTTKMAKRGIGLKAFDFDSKVESATGQTVRMKVKIQNGLDKEQTKQITTLIKDQKLKVQATIQGDSVRVVGKKKDDLQEVMAAIRNANFNFDANFTNFKG.

The protein belongs to the YajQ family.

Nucleotide-binding protein. In Leptospira biflexa serovar Patoc (strain Patoc 1 / Ames), this protein is Nucleotide-binding protein LBF_1338.